Here is a 428-residue protein sequence, read N- to C-terminus: Tyrosine--tRNA ligase (428 aa).

Y41 lines the L-tyrosine pocket. The 'HIGH' region signature appears at 46–55; the sequence is PTADSLHLGH. L-tyrosine is bound by residues Y179 and Q183. The short motif at 239–243 is the 'KMSKS' region element; sequence KFGKT. K242 contributes to the ATP binding site. The S4 RNA-binding domain occupies 361–418; it reads ADLMQALVDSELQPSRGQARKTIASNAITINGEKQSDPEYTFSDSDRLFGRYTLLRRG.

This sequence belongs to the class-I aminoacyl-tRNA synthetase family. TyrS type 1 subfamily. In terms of assembly, homodimer.

The protein localises to the cytoplasm. It carries out the reaction tRNA(Tyr) + L-tyrosine + ATP = L-tyrosyl-tRNA(Tyr) + AMP + diphosphate + H(+). Functionally, catalyzes the attachment of tyrosine to tRNA(Tyr) in a two-step reaction: tyrosine is first activated by ATP to form Tyr-AMP and then transferred to the acceptor end of tRNA(Tyr). This chain is Tyrosine--tRNA ligase, found in Cronobacter sakazakii (strain ATCC BAA-894) (Enterobacter sakazakii).